Reading from the N-terminus, the 517-residue chain is tRNA-2-methylthio-N(6)-dimethylallyladenosine synthase (517 aa).

The region spanning 29-146 (RTYQVRTYGC…LPTLLERARH (118 aa)) is the MTTase N-terminal domain. [4Fe-4S] cluster contacts are provided by Cys-38, Cys-75, Cys-109, Cys-183, Cys-187, and Cys-190. Residues 169 to 405 (RESAYAAWVS…VELQESISLQ (237 aa)) enclose the Radical SAM core domain. Residues 408–475 (QALVGQTVEL…PHHLIADAGV (68 aa)) form the TRAM domain.

The protein belongs to the methylthiotransferase family. MiaB subfamily. As to quaternary structure, monomer. The cofactor is [4Fe-4S] cluster.

It localises to the cytoplasm. The enzyme catalyses N(6)-dimethylallyladenosine(37) in tRNA + (sulfur carrier)-SH + AH2 + 2 S-adenosyl-L-methionine = 2-methylsulfanyl-N(6)-dimethylallyladenosine(37) in tRNA + (sulfur carrier)-H + 5'-deoxyadenosine + L-methionine + A + S-adenosyl-L-homocysteine + 2 H(+). In terms of biological role, catalyzes the methylthiolation of N6-(dimethylallyl)adenosine (i(6)A), leading to the formation of 2-methylthio-N6-(dimethylallyl)adenosine (ms(2)i(6)A) at position 37 in tRNAs that read codons beginning with uridine. This Mycolicibacterium paratuberculosis (strain ATCC BAA-968 / K-10) (Mycobacterium paratuberculosis) protein is tRNA-2-methylthio-N(6)-dimethylallyladenosine synthase.